The following is a 367-amino-acid chain: Alanine racemase (367 aa).

Lysine 40 (proton acceptor; specific for D-alanine) is an active-site residue. Lysine 40 is subject to N6-(pyridoxal phosphate)lysine. Arginine 136 serves as a coordination point for substrate. The active-site Proton acceptor; specific for L-alanine is tyrosine 263. Methionine 310 lines the substrate pocket.

The protein belongs to the alanine racemase family. The cofactor is pyridoxal 5'-phosphate.

The enzyme catalyses L-alanine = D-alanine. It participates in amino-acid biosynthesis; D-alanine biosynthesis; D-alanine from L-alanine: step 1/1. Its function is as follows. Catalyzes the interconversion of L-alanine and D-alanine. May also act on other amino acids. This chain is Alanine racemase (alr), found in Streptococcus pneumoniae (strain ATCC 700669 / Spain 23F-1).